Consider the following 486-residue polypeptide: Cardiolipin synthase A (486 aa).

The next 2 helical transmembrane spans lie at 3–23 (TFYT…IAGV) and 38–58 (MAWL…YLSF). PLD phosphodiesterase domains are found at residues 219–246 (MDLR…VDPR) and 399–426 (EGGL…DMRS). Active-site residues include histidine 224, lysine 226, aspartate 231, histidine 404, lysine 406, and aspartate 411.

This sequence belongs to the phospholipase D family. Cardiolipin synthase subfamily. ClsA sub-subfamily.

Its subcellular location is the cell inner membrane. The enzyme catalyses 2 a 1,2-diacyl-sn-glycero-3-phospho-(1'-sn-glycerol) = a cardiolipin + glycerol. Functionally, catalyzes the reversible phosphatidyl group transfer from one phosphatidylglycerol molecule to another to form cardiolipin (CL) (diphosphatidylglycerol) and glycerol. This is Cardiolipin synthase A from Citrobacter koseri (strain ATCC BAA-895 / CDC 4225-83 / SGSC4696).